The following is a 365-amino-acid chain: Membrane-bound lytic murein transglycosylase C (365 aa).

Positions 1-19 are cleaved as a signal peptide; that stretch reads MKKYTKYLPLLLIIPFLAA. Cys20 carries the N-palmitoyl cysteine lipid modification. Cys20 is lipidated: S-diacylglycerol cysteine.

The protein belongs to the transglycosylase Slt family.

Its subcellular location is the cell outer membrane. The enzyme catalyses Exolytic cleavage of the (1-&gt;4)-beta-glycosidic linkage between N-acetylmuramic acid (MurNAc) and N-acetylglucosamine (GlcNAc) residues in peptidoglycan, from either the reducing or the non-reducing ends of the peptidoglycan chains, with concomitant formation of a 1,6-anhydrobond in the MurNAc residue.. Functionally, murein-degrading enzyme. May play a role in recycling of muropeptides during cell elongation and/or cell division. This is Membrane-bound lytic murein transglycosylase C from Actinobacillus pleuropneumoniae serotype 5b (strain L20).